A 204-amino-acid polypeptide reads, in one-letter code: Large ribosomal subunit protein eL15 (204 aa).

Belongs to the eukaryotic ribosomal protein eL15 family. Component of the large ribosomal subunit.

It localises to the cytoplasm. Component of the large ribosomal subunit. The ribosome is a large ribonucleoprotein complex responsible for the synthesis of proteins in the cell. In Siniperca knerii (Big-eye mandarin fish), this protein is Large ribosomal subunit protein eL15 (rpl15).